A 563-amino-acid chain; its full sequence is Putative ABC transporter ATP-binding protein SCO2324 (563 aa).

The ABC transporter 1 domain maps to 2–243 (IRFEDVSVTY…SPVYPPVVGL (242 aa)). Position 36–43 (36–43 (GPSGVGKS)) interacts with ATP. The disordered stretch occupies residues 271-317 (AGREIPDHTPPPSAPLPAPPAPRPVTSRWRRRGKRPENPSAPTPYAA). Positions 278-293 (HTPPPSAPLPAPPAPR) are enriched in pro residues. Residues 317–545 (AEVRSLAVRR…SPSYAPQVAK (229 aa)) enclose the ABC transporter 2 domain. ATP is bound at residue 349–356 (GRNGAGKS).

This sequence belongs to the ABC transporter superfamily.

It is found in the cell membrane. Functionally, probably part of an ABC transporter complex. Responsible for energy coupling to the transport system. This is Putative ABC transporter ATP-binding protein SCO2324 from Streptomyces coelicolor (strain ATCC BAA-471 / A3(2) / M145).